The sequence spans 89 residues: Small ribosomal subunit protein uS15 (89 aa).

It belongs to the universal ribosomal protein uS15 family. As to quaternary structure, part of the 30S ribosomal subunit. Forms a bridge to the 50S subunit in the 70S ribosome, contacting the 23S rRNA.

In terms of biological role, one of the primary rRNA binding proteins, it binds directly to 16S rRNA where it helps nucleate assembly of the platform of the 30S subunit by binding and bridging several RNA helices of the 16S rRNA. Functionally, forms an intersubunit bridge (bridge B4) with the 23S rRNA of the 50S subunit in the ribosome. The sequence is that of Small ribosomal subunit protein uS15 from Bradyrhizobium sp. (strain BTAi1 / ATCC BAA-1182).